The following is an 87-amino-acid chain: Phosphoribosyl-ATP pyrophosphatase (87 aa).

Belongs to the PRA-PH family.

It localises to the cytoplasm. The catalysed reaction is 1-(5-phospho-beta-D-ribosyl)-ATP + H2O = 1-(5-phospho-beta-D-ribosyl)-5'-AMP + diphosphate + H(+). The protein operates within amino-acid biosynthesis; L-histidine biosynthesis; L-histidine from 5-phospho-alpha-D-ribose 1-diphosphate: step 2/9. The polypeptide is Phosphoribosyl-ATP pyrophosphatase (Leifsonia xyli subsp. xyli (strain CTCB07)).